A 475-amino-acid polypeptide reads, in one-letter code: GTPase Der (475 aa).

EngA-type G domains are found at residues 3 to 167 and 205 to 380; these read LTIA…GGER and LRIA…RVWN. Residues 9-16, 56-60, 119-122, 211-218, 258-262, and 323-326 contribute to the GTP site; these read GRPNVGKS, DTAGL, NKSE, GRPNTGKS, and NKWD. The KH-like domain maps to 381-465; sequence RRISTGKLNR…PIRISLRASD (85 aa).

It belongs to the TRAFAC class TrmE-Era-EngA-EngB-Septin-like GTPase superfamily. EngA (Der) GTPase family. As to quaternary structure, associates with the 50S ribosomal subunit.

In terms of biological role, GTPase that plays an essential role in the late steps of ribosome biogenesis. The protein is GTPase Der of Bartonella henselae (strain ATCC 49882 / DSM 28221 / CCUG 30454 / Houston 1) (Rochalimaea henselae).